The chain runs to 499 residues: Aspartyl/glutamyl-tRNA(Asn/Gln) amidotransferase subunit B (499 aa).

The protein belongs to the GatB/GatE family. GatB subfamily. As to quaternary structure, heterotrimer of A, B and C subunits.

The enzyme catalyses L-glutamyl-tRNA(Gln) + L-glutamine + ATP + H2O = L-glutaminyl-tRNA(Gln) + L-glutamate + ADP + phosphate + H(+). The catalysed reaction is L-aspartyl-tRNA(Asn) + L-glutamine + ATP + H2O = L-asparaginyl-tRNA(Asn) + L-glutamate + ADP + phosphate + 2 H(+). Its function is as follows. Allows the formation of correctly charged Asn-tRNA(Asn) or Gln-tRNA(Gln) through the transamidation of misacylated Asp-tRNA(Asn) or Glu-tRNA(Gln) in organisms which lack either or both of asparaginyl-tRNA or glutaminyl-tRNA synthetases. The reaction takes place in the presence of glutamine and ATP through an activated phospho-Asp-tRNA(Asn) or phospho-Glu-tRNA(Gln). The chain is Aspartyl/glutamyl-tRNA(Asn/Gln) amidotransferase subunit B from Bifidobacterium longum (strain DJO10A).